The chain runs to 224 residues: Beta-casein (224 aa).

The signal sequence occupies residues 1-15 (MKVLILACLVALALA). Ser30, Ser32, Ser33, and Ser34 each carry phosphoserine.

It belongs to the beta-casein family. Mammary gland specific. Secreted in milk.

It is found in the secreted. In terms of biological role, important role in determination of the surface properties of the casein micelles. The protein is Beta-casein (CSN2) of Bubalus bubalis (Domestic water buffalo).